The sequence spans 177 residues: von Ebner gland protein 1 (177 aa).

Residues 1 to 18 (MKALLLTFGLSLLAALQA) form the signal peptide. An intrachain disulfide couples Cys-80 to Cys-172.

This sequence belongs to the calycin superfamily. Lipocalin family. In terms of assembly, homodimer.

The protein localises to the secreted. In terms of biological role, could play a role in taste reception. Could be necessary for the concentration and delivery of sapid molecules in the gustatory system. The sequence is that of von Ebner gland protein 1 (Vegp1) from Rattus norvegicus (Rat).